The primary structure comprises 452 residues: Pup--protein ligase (452 aa).

Residue glutamate 9 coordinates Mg(2+). Arginine 53 contributes to the ATP binding site. Tyrosine 55 contacts Mg(2+). Residue aspartate 57 is the Proton acceptor of the active site. Glutamate 63 is a binding site for Mg(2+). Residues threonine 66 and tryptophan 419 each coordinate ATP.

Belongs to the Pup ligase/Pup deamidase family. Pup-conjugating enzyme subfamily.

The catalysed reaction is ATP + [prokaryotic ubiquitin-like protein]-L-glutamate + [protein]-L-lysine = ADP + phosphate + N(6)-([prokaryotic ubiquitin-like protein]-gamma-L-glutamyl)-[protein]-L-lysine.. It functions in the pathway protein degradation; proteasomal Pup-dependent pathway. It participates in protein modification; protein pupylation. Its function is as follows. Catalyzes the covalent attachment of the prokaryotic ubiquitin-like protein modifier Pup to the proteasomal substrate proteins, thereby targeting them for proteasomal degradation. This tagging system is termed pupylation. The ligation reaction involves the side-chain carboxylate of the C-terminal glutamate of Pup and the side-chain amino group of a substrate lysine. The chain is Pup--protein ligase from Streptosporangium roseum (strain ATCC 12428 / DSM 43021 / JCM 3005 / KCTC 9067 / NCIMB 10171 / NRRL 2505 / NI 9100).